Consider the following 302-residue polypeptide: Giardin subunit alpha-5 (302 aa).

4 Annexin repeats span residues 1–72 (MTST…VNMW), 74–144 (SRHE…VAGW), 153–226 (GSVE…AAHF), and 230–298 (GLPV…TLWR).

The protein belongs to the annexin family. Giardin subunit alpha subfamily.

It localises to the cytoplasm. The protein resides in the cytoskeleton. Giardins are involved in parasite attachment to the intestinal mucosa and in the cytoskeletal disassembly and reassembly that marks the transition from infectious trophozoite to transmissible cyst. They may interact with other cytoskeletal proteins such as microtubules in the microribbons or crossbridges, to maintain the integrity of the ventral disk. This is Giardin subunit alpha-5 from Giardia intestinalis (Giardia lamblia).